The chain runs to 44 residues: MPHNEYYNDDGELDRETCPRCGDTVLAEHEDRQHCGKCGYTEWK.

Zn(2+)-binding residues include Cys-18, Cys-21, Cys-35, and Cys-38. The segment at 18 to 38 (CPRCGDTVLAEHEDRQHCGKC) adopts a C4-type zinc-finger fold.

Belongs to the eukaryotic ribosomal protein eS31 family. Part of the 30S ribosomal subunit. It depends on Zn(2+) as a cofactor.

In Haloarcula marismortui (strain ATCC 43049 / DSM 3752 / JCM 8966 / VKM B-1809) (Halobacterium marismortui), this protein is Small ribosomal subunit protein eS31.